The sequence spans 79 residues: Protein SNA2 (79 aa).

At 1–6 (MHARDW) the chain is on the cytoplasmic side. Residues 7–27 (FLVFIAIFIPPLAVWLKRGFF) form a helical membrane-spanning segment. Over 28-32 (TKDLL) the chain is Vesicular. A helical transmembrane segment spans residues 33 to 53 (INFLLFLLGFFPGLIHALYVI). Residues 54 to 79 (SCHPYEENEARYSHLSSSDDNYGSLA) lie on the Cytoplasmic side of the membrane. A phosphoserine mark is found at serine 71 and serine 77.

This sequence belongs to the UPF0057 (PMP3) family.

The protein localises to the membrane. It localises to the lipid droplet. This is Protein SNA2 (SNA2) from Saccharomyces cerevisiae (strain ATCC 204508 / S288c) (Baker's yeast).